A 130-amino-acid chain; its full sequence is Small ribosomal subunit protein uS11c (130 aa).

This sequence belongs to the universal ribosomal protein uS11 family. Part of the 30S ribosomal subunit.

It localises to the plastid. It is found in the chloroplast. In Marchantia polymorpha (Common liverwort), this protein is Small ribosomal subunit protein uS11c.